We begin with the raw amino-acid sequence, 319 residues long: tRNA dimethylallyltransferase (319 aa).

15-22 (GPTASGKS) is a binding site for ATP. Position 17–22 (17–22 (TASGKS)) interacts with substrate. 2 interaction with substrate tRNA regions span residues 40-43 (DSRQ) and 164-168 (QRLVR).

It belongs to the IPP transferase family. As to quaternary structure, monomer. Mg(2+) serves as cofactor.

The enzyme catalyses adenosine(37) in tRNA + dimethylallyl diphosphate = N(6)-dimethylallyladenosine(37) in tRNA + diphosphate. Its function is as follows. Catalyzes the transfer of a dimethylallyl group onto the adenine at position 37 in tRNAs that read codons beginning with uridine, leading to the formation of N6-(dimethylallyl)adenosine (i(6)A). This is tRNA dimethylallyltransferase from Chlorobium phaeobacteroides (strain DSM 266 / SMG 266 / 2430).